A 717-amino-acid chain; its full sequence is P-loop NTPase domain-containing protein LPA1 homolog 2 (717 aa).

Disordered regions lie at residues 235–259 (KKLK…SSTT) and 532–629 (HYSS…DTIS). Composition is skewed to polar residues over residues 243–259 (VNSN…SSTT) and 532–545 (HYSS…TSDG). Over residues 559-582 (SDEDDEEGDDDFHEPDSDEDLSDN) the composition is skewed to acidic residues. The segment covering 583–602 (NDERNRDEIGSVDEESTKSD) has biased composition (basic and acidic residues).

Functionally, may be not required for the accumulation of phytic acid in seeds. Phytic acid is the primary storage form of phosphorus in cereal grains and other plant seeds. This is P-loop NTPase domain-containing protein LPA1 homolog 2 from Arabidopsis thaliana (Mouse-ear cress).